The chain runs to 559 residues: Neutral amino acid transporter 9 (559 aa).

The Cytoplasmic segment spans residues 1–118 (MANVDSDSRH…YTEGYRKNTS (118 aa)). A helical membrane pass occupies residues 119–139 (LVTIFMIWNTMMGTSILSIPW). Residues 128-133 (TMMGTS) are important for arginine binding and amino acid transport. S133 lines the arginine pocket. At 140–145 (GIKQAG) the chain is on the lumenal side. Residues 146–166 (FTTGMCVIVLMGLLTLYCCYR) form a helical membrane-spanning segment. The Cytoplasmic portion of the chain corresponds to 167-197 (VVKSRSMIVTSDTTTWEYPDVCKHYFGSFGQ). Residues 198-224 (WSSLLFSLVSLIGAMIVYWVLMSNFLF) traverse the membrane as a helical segment. Residues 225–281 (NTGKFIFNFIHHINDTDTVLSTNNSSPVICPSAGSGHPDNSSMIFYNSDTEVRLFER) lie on the Lumenal side of the membrane. N-linked (GlcNAc...) asparagine glycans are attached at residues N238, N247, and N264. A disulfide bridge links C254 with C422. A helical transmembrane segment spans residues 282–298 (WWDKSKTVPFYLIGLLL). The Cytoplasmic segment spans residues 299 to 307 (PLLNFKSPS). A helical membrane pass occupies residues 308–332 (FFSKFNILGTVSVLYLIFIVTLKAI). Over 333-354 (RLGFHLEFHWFAPTEFFVPEIR) the chain is Lumenal. The chain crosses the membrane as a helical span at residues 355 to 375 (AQFPQLTGVLTLAFFIHNCII). Residues 376–392 (TLLKNNKNQENNVRDLC) lie on the Cytoplasmic side of the membrane. The chain crosses the membrane as a helical span at residues 393 to 413 (IAYMLVTLTYLYIGVLVFASF). Residues 414-435 (PSPPLPKDCIEQNFLDNFPSSD) lie on the Lumenal side of the membrane. The helical transmembrane segment at 436–456 (TLSFIARICLLFQMMTVYPLL) threads the bilayer. The short motif at 442-452 (RICLLFQMMTV) is the CARC motif element. A CRAC motif motif is present at residues 455–461 (LLGYLAR). Residues 457-477 (GYLARVQLLGHIFGDIYPSIF) are Cytoplasmic-facing. Residues 478–498 (HVLILNLIIVGAGVTMACFYP) traverse the membrane as a helical segment. Topologically, residues 499–505 (NIGGIIR) are lumenal. A helical transmembrane segment spans residues 506-526 (YSGAACGLAFVFIYPSLIYIL). At 527 to 538 (SQHQEERLTWPK) the chain is on the cytoplasmic side. A helical transmembrane segment spans residues 539–559 (LVFHIIIIILGLANLIAQFFM).

Belongs to the amino acid/polyamine transporter 2 family. SLC38A9 subfamily. As to quaternary structure, associated component of the Ragulator complex (composed of LAMTOR1, LAMTOR2, LAMTOR3, LAMTOR4 and LAMTOR5). Associated component of the Rag GTPases heterodimers (composed of RRAGA, RRAGB, RRAGC and RRAGD); this interaction is independent of the Ragulator complex but depends on the nucleotide loading state of the Rag GTPase heterodimer. Interacts with TM4SF5. Interacts with NPC1; this interaction inhibits cholesterol-mediated mTORC1 activation via its sterol transport activity. Glycosylated.

Its subcellular location is the lysosome membrane. It localises to the late endosome membrane. It carries out the reaction L-leucine(in) = L-leucine(out). The enzyme catalyses L-tyrosine(in) = L-tyrosine(out). It catalyses the reaction L-glutamine(out) = L-glutamine(in). The catalysed reaction is L-asparagine(out) = L-asparagine(in). Its function is as follows. Lysosomal amino acid transporter involved in the activation of mTORC1 in response to amino acid levels. Probably acts as an amino acid sensor of the Rag GTPases and Ragulator complexes, 2 complexes involved in amino acid sensing and activation of mTORC1, a signaling complex promoting cell growth in response to growth factors, energy levels, and amino acids. Following activation by amino acids, the Ragulator and Rag GTPases function as a scaffold recruiting mTORC1 to lysosomes where it is in turn activated. SLC38A9 mediates transport of amino acids with low capacity and specificity with a slight preference for polar amino acids. Acts as an arginine sensor. Following activation by arginine binding, mediates transport of L-glutamine, leucine and tyrosine with high efficiency, and is required for the efficient utilization of these amino acids after lysosomal protein degradation. However, the transport mechanism is not well defined and the role of sodium is not clear. Can disassemble the lysosomal folliculin complex (LFC), and thereby triggers GAP activity of FLCN:FNIP2 toward RRAGC. Acts as an cholesterol sensor that conveys increases in lysosomal cholesterol, leading to lysosomal recruitment and activation of mTORC1 via the Rag GTPases. Guanine exchange factor (GEF) that, upon arginine binding, stimulates GDP release from RRAGA and therefore activates the Rag GTPase heterodimer and the mTORC1 pathway in response to nutrient sufficiency. The polypeptide is Neutral amino acid transporter 9 (Rattus norvegicus (Rat)).